The following is a 552-amino-acid chain: ATP synthase subunit alpha (552 aa).

173–180 is an ATP binding site; sequence GDRQTGKT. The disordered stretch occupies residues 516-552; that stretch reads DGKPLVNEPAPSPLDPGLVRQESIPVHRPAARKDDEG.

Belongs to the ATPase alpha/beta chains family. F-type ATPases have 2 components, CF(1) - the catalytic core - and CF(0) - the membrane proton channel. CF(1) has five subunits: alpha(3), beta(3), gamma(1), delta(1), epsilon(1). CF(0) has three main subunits: a(1), b(2) and c(9-12). The alpha and beta chains form an alternating ring which encloses part of the gamma chain. CF(1) is attached to CF(0) by a central stalk formed by the gamma and epsilon chains, while a peripheral stalk is formed by the delta and b chains.

The protein localises to the cell membrane. It catalyses the reaction ATP + H2O + 4 H(+)(in) = ADP + phosphate + 5 H(+)(out). Its function is as follows. Produces ATP from ADP in the presence of a proton gradient across the membrane. The alpha chain is a regulatory subunit. This Frankia casuarinae (strain DSM 45818 / CECT 9043 / HFP020203 / CcI3) protein is ATP synthase subunit alpha.